The primary structure comprises 637 residues: Chaperone protein dnaK2 (637 aa).

The residue at position 197 (Thr-197) is a Phosphothreonine; by autocatalysis. Positions 602–637 (AAAGGAAPGGDAGASAASGGGDASDDVIDAEFTETK) are disordered. Gly residues predominate over residues 603-623 (AAGGAAPGGDAGASAASGGGD). The span at 624–637 (ASDDVIDAEFTETK) shows a compositional bias: acidic residues.

This sequence belongs to the heat shock protein 70 family.

Functionally, acts as a chaperone. This chain is Chaperone protein dnaK2 (dnaK2), found in Parasynechococcus marenigrum (strain WH8102).